Reading from the N-terminus, the 268-residue chain is tRNA pseudouridine synthase A (268 aa).

Catalysis depends on aspartate 52, which acts as the Nucleophile. Tyrosine 113 lines the substrate pocket.

Belongs to the tRNA pseudouridine synthase TruA family. In terms of assembly, homodimer.

It catalyses the reaction uridine(38/39/40) in tRNA = pseudouridine(38/39/40) in tRNA. Its function is as follows. Formation of pseudouridine at positions 38, 39 and 40 in the anticodon stem and loop of transfer RNAs. The chain is tRNA pseudouridine synthase A from Chlamydia felis (strain Fe/C-56) (Chlamydophila felis).